The primary structure comprises 175 residues: Beta-carotene hydroxylase (175 aa).

Residues F11–G136 form the Fatty acid hydroxylase domain.

This sequence belongs to the sterol desaturase family.

It carries out the reaction all-trans-beta-carotene + 4 reduced [2Fe-2S]-[ferredoxin] + 2 O2 + 4 H(+) = all-trans-zeaxanthin + 4 oxidized [2Fe-2S]-[ferredoxin] + 2 H2O. It participates in carotenoid biosynthesis; zeaxanthin biosynthesis. Catalyzes the hydroxylation reaction from beta-carotene to zeaxanthin. This Pantoea ananas (Erwinia uredovora) protein is Beta-carotene hydroxylase (crtZ).